Here is a 212-residue protein sequence, read N- to C-terminus: Large ribosomal subunit protein uL3 (212 aa).

The segment at 130 to 155 (KRGNMTHGSKNHRLPGSTGAGTTPGR) is disordered.

The protein belongs to the universal ribosomal protein uL3 family. In terms of assembly, part of the 50S ribosomal subunit. Forms a cluster with proteins L14 and L19.

Its function is as follows. One of the primary rRNA binding proteins, it binds directly near the 3'-end of the 23S rRNA, where it nucleates assembly of the 50S subunit. This is Large ribosomal subunit protein uL3 from Rippkaea orientalis (strain PCC 8801 / RF-1) (Cyanothece sp. (strain PCC 8801)).